The chain runs to 1064 residues: MDDYHVNTAFSMGRGNQQDDGNSESNSMHTQPSTMAPATLRMMGKSPQQQQQQNTPLMPPADIKYANNGNSHQAEQKERQVELEGKSRENAPKPNTTSQSRVSSSQGMPKQFHRKSLGDWEFVETVGAGSMGKVKLAKHRYTNEVCAVKIVNRATKAFLHKEQMLPPPKNEQDVLERQKKLEKEISRDKRTIREASLGQILYHPHICRLFEMCTLSNHFYMLFEYVSGGQLLDYIIQHGSIREHQARKFARGIASALIYLHANNIVHRDLKIENIMISDSSEIKIIDFGLSNIYDSRKQLHTFCGSLYFAAPELLKANPYTGPEVDVWSFGVVLFVLVCGKVPFDDENSSVLHEKIKQGKVEYPQHLSIEVISLLSKMLVVDPKRRATLKQVVEHHWMVRGFNGPPPSYLPKRVPLTIEMLDINVLKEMYRLEFIDDVEETRSVLVSIITDPTYVLLSRQYWTLAAKMNAESSDNGNAPNITESFEDPTRAYHPMISIYYLTSEMLDRKHAKIRNQQQRQSHENIEKLSEIPESVKQRDVEVNTTAMKSEPEATLATKDTSVPFTPKNSDGTEPPLHVLIPPRLAMPEQAHTSPTSRKSSDNQRREMEYALSPTPQGNDYQQFRVPSTTGDPSEKAKFGNIFRKLSQRRKKTIEQTSVNSNNSINKPVQKTHSRAVSDFVPGFAKPSYDSNYTMNEPVKTNDSRGGNKGDFPALPADAENMVEKQREKQIEEDIMKLHDINKQNNEVAKGSGREAYAAQKFEGSDDDENHPLPPLNVAKGRKLHPSARAKSVGHARRESLKYMRPPMPSSAYPQQELIDTGFLESSDDNKSDSLGNVTSQTNDSVSVHSVNAHINSPSVEKELTDEEILQEASRAPAGSMPSIDFPRSLFLKGFFSVQTTSSKPLPIVRYKIMFVLRKMNIEFKEVKGGFVCMQRFSSNNVAAKREGTPRSIMPLSHHESIRRQGSNKYSPSSPLTTNSIHQRKTSITETYGDDKHSGTSLENIHQQGDGSEGMTTTEKEPIKFEIHIVKVRIVGLAGVHFKKISGNTWLYKELASSILKELKL.

A disordered region spans residues 1 to 113 (MDDYHVNTAF…SSQGMPKQFH (113 aa)). The segment covering 8-36 (TAFSMGRGNQQDDGNSESNSMHTQPSTMA) has biased composition (polar residues). The segment covering 74-91 (AEQKERQVELEGKSRENA) has biased composition (basic and acidic residues). Positions 93-108 (KPNTTSQSRVSSSQGM) are enriched in polar residues. One can recognise a Protein kinase domain in the interval 120–398 (WEFVETVGAG…LKQVVEHHWM (279 aa)). ATP-binding positions include 126 to 134 (VGAGSMGKV) and Lys149. Asp269 acts as the Proton acceptor in catalysis. At Ser534 the chain carries Phosphoserine. The segment at 549-621 (SEPEATLATK…SPTPQGNDYQ (73 aa)) is disordered. Polar residues predominate over residues 557 to 571 (TKDTSVPFTPKNSDG). Ser593 carries the phosphoserine modification. Over residues 598–608 (KSSDNQRREME) the composition is skewed to basic and acidic residues. Ser646 carries the post-translational modification Phosphoserine. Disordered stretches follow at residues 652–672 (TIEQ…QKTH), 694–714 (MNEP…FPAL), 762–797 (EGSD…HARR), 823–843 (LESS…QTND), and 958–1016 (HESI…GMTT). Over residues 654 to 670 (EQTSVNSNNSINKPVQK) the composition is skewed to polar residues. A Phosphoserine modification is found at Ser764. Over residues 779 to 794 (KGRKLHPSARAKSVGH) the composition is skewed to basic residues. 3 stretches are compositionally biased toward polar residues: residues 832–843 (DSLGNVTSQTND), 963–989 (RQGS…SITE), and 998–1016 (GTSL…GMTT). The residue at position 986 (Ser986) is a Phosphoserine. The 50-residue stretch at 1015–1064 (TTTEKEPIKFEIHIVKVRIVGLAGVHFKKISGNTWLYKELASSILKELKL) folds into the KA1 domain.

Belongs to the protein kinase superfamily. CAMK Ser/Thr protein kinase family. NIM1 subfamily. As to quaternary structure, interacts with SEC9 and SRO7. Post-translationally, autophosphorylated.

The protein resides in the cytoplasm. It localises to the cell membrane. The catalysed reaction is L-seryl-[protein] + ATP = O-phospho-L-seryl-[protein] + ADP + H(+). It catalyses the reaction L-threonyl-[protein] + ATP = O-phospho-L-threonyl-[protein] + ADP + H(+). Serine/threonine protein kinase involved in the regulation of exocytosis. Induces phosphorylation of SEC9 and its release from the plasma membrane to the cytosol. The chain is Serine/threonine protein kinase KIN1 (KIN1) from Saccharomyces cerevisiae (strain ATCC 204508 / S288c) (Baker's yeast).